The chain runs to 411 residues: Acetate kinase (411 aa).

Asparagine 7 serves as a coordination point for Mg(2+). Lysine 14 serves as a coordination point for ATP. Arginine 94 lines the substrate pocket. The active-site Proton donor/acceptor is the aspartate 151. ATP is bound by residues 211 to 215 (HLGNG), 285 to 287 (DMR), and 333 to 337 (GIGEN). Position 387 (glutamate 387) interacts with Mg(2+).

The protein belongs to the acetokinase family. In terms of assembly, homodimer. It depends on Mg(2+) as a cofactor. Mn(2+) is required as a cofactor.

It is found in the cytoplasm. It catalyses the reaction acetate + ATP = acetyl phosphate + ADP. It functions in the pathway metabolic intermediate biosynthesis; acetyl-CoA biosynthesis; acetyl-CoA from acetate: step 1/2. In terms of biological role, catalyzes the formation of acetyl phosphate from acetate and ATP. Can also catalyze the reverse reaction. This is Acetate kinase from Syntrophobacter fumaroxidans (strain DSM 10017 / MPOB).